The primary structure comprises 291 residues: MASSKKVTLSVLSREQSEGVGARVRRSIGGPELKMLDPFLLFDEFKGGRPGGFPDHPHRGFETVSYLLEGGSMAHEDFCGHVGKMNPGDLQWMTAGRGILHAEMPCSEEPAHGLQLWVNLKRSEKMVEPQYQELKSEEIPKPSKDGVTVAVISGEALGIKSKVYTRTPTLYLDFKLDQGAKHSQPIPKGWTSFIYTISGDVYIGPDDAQQKIEPHRTAVLGEGDTVQLENKDPKRSHFVLIAGEPLREPVVQHGPFVMNTNEEISEAILDFRNAKNGFEGAKTWKSKIGNQ.

Positions 56, 58, 101, and 103 each coordinate Fe cation.

This sequence belongs to the pirin family. In terms of assembly, may interact with NF1/CTF1. Interacts with BCL3. Identified in a complex comprised of PIR, BLC3, NFKB1 and target DNA. Fe cation serves as cofactor.

The protein localises to the nucleus. Its subcellular location is the cytoplasm. The enzyme catalyses quercetin + O2 = 2-(3,4-dihydroxybenzoyloxy)-4,6-dihydroxybenzoate + CO. The protein operates within flavonoid metabolism; quercetin degradation. Functionally, transcriptional coregulator of NF-kappa-B which facilitates binding of NF-kappa-B proteins to target kappa-B genes in a redox-state-dependent manner. May be required for efficient terminal myeloid maturation of hematopoietic cells. Has quercetin 2,3-dioxygenase activity (in vitro). The chain is Pirin (Pir) from Rattus norvegicus (Rat).